A 157-amino-acid chain; its full sequence is DNA gyrase inhibitor (157 aa).

It belongs to the DNA gyrase inhibitor family. In terms of assembly, interacts with DNA gyrase.

It is found in the cytoplasm. In terms of biological role, inhibits the supercoiling activity of DNA gyrase. Acts by inhibiting DNA gyrase at an early step, prior to (or at the step of) binding of DNA by the gyrase. It protects cells against toxins that target DNA gyrase, by inhibiting activity of these toxins and reducing the formation of lethal double-strand breaks in the cell. The protein is DNA gyrase inhibitor of Enterobacter lignolyticus (strain SCF1).